Consider the following 255-residue polypeptide: 4-hydroxy-tetrahydrodipicolinate reductase (255 aa).

NAD(+) is bound by residues 9-14 (GFKGKM), 89-91 (GTT), and 115-118 (APNF). His-145 functions as the Proton donor/acceptor in the catalytic mechanism. Position 146 (His-146) interacts with (S)-2,3,4,5-tetrahydrodipicolinate. Lys-149 serves as the catalytic Proton donor. Position 155–156 (155–156 (GT)) interacts with (S)-2,3,4,5-tetrahydrodipicolinate.

The protein belongs to the DapB family.

It localises to the cytoplasm. The enzyme catalyses (S)-2,3,4,5-tetrahydrodipicolinate + NAD(+) + H2O = (2S,4S)-4-hydroxy-2,3,4,5-tetrahydrodipicolinate + NADH + H(+). The catalysed reaction is (S)-2,3,4,5-tetrahydrodipicolinate + NADP(+) + H2O = (2S,4S)-4-hydroxy-2,3,4,5-tetrahydrodipicolinate + NADPH + H(+). It functions in the pathway amino-acid biosynthesis; L-lysine biosynthesis via DAP pathway; (S)-tetrahydrodipicolinate from L-aspartate: step 4/4. In terms of biological role, catalyzes the conversion of 4-hydroxy-tetrahydrodipicolinate (HTPA) to tetrahydrodipicolinate. This is 4-hydroxy-tetrahydrodipicolinate reductase from Streptococcus suis (strain 98HAH33).